A 608-amino-acid chain; its full sequence is Probable potassium transport system protein Kup (608 aa).

12 consecutive transmembrane segments (helical) span residues 9 to 29, 46 to 66, 99 to 119, 137 to 157, 165 to 185, 213 to 233, 247 to 267, 285 to 305, 337 to 357, 363 to 383, 396 to 416, and 419 to 439; these read LSGVTLAAIGVVYGDIGTSPL, PAAILGFLSLIFWLLILVVSV, TPVLIILGLIGGSFFYGEVVI, PSLDPYIVPLSVLVLTLLFAI, VGKLFAPIMLTWFLTLAVLGL, TSFFALGAVVLAITGVEALYA, WFVVVLPSLVLNYFGQGALLL, ALLPLLVLATMATVIASQAVI, IYIPVINWILYISVVIVIMSF, LAAAYGIAVTGTMVLTSILFC, LVAALFALLLAIDVPLFAANL, and IFSGGWLPLTLGAVMFTLMTS.

This sequence belongs to the HAK/KUP transporter (TC 2.A.72) family.

Its subcellular location is the cell inner membrane. It carries out the reaction K(+)(in) + H(+)(in) = K(+)(out) + H(+)(out). In terms of biological role, transport of potassium into the cell. Likely operates as a K(+):H(+) symporter. The chain is Probable potassium transport system protein Kup from Aeromonas salmonicida (strain A449).